The primary structure comprises 183 residues: ATP-dependent protease subunit HslV (183 aa).

The active site involves Thr13. Na(+) contacts are provided by Gly168, Cys171, and Thr174.

This sequence belongs to the peptidase T1B family. HslV subfamily. As to quaternary structure, a double ring-shaped homohexamer of HslV is capped on each side by a ring-shaped HslU homohexamer. The assembly of the HslU/HslV complex is dependent on binding of ATP.

Its subcellular location is the cytoplasm. It catalyses the reaction ATP-dependent cleavage of peptide bonds with broad specificity.. Allosterically activated by HslU binding. Functionally, protease subunit of a proteasome-like degradation complex believed to be a general protein degrading machinery. This is ATP-dependent protease subunit HslV from Stenotrophomonas maltophilia (strain R551-3).